A 558-amino-acid polypeptide reads, in one-letter code: UvrABC system protein C (558 aa).

Positions 12–92 (LLPGVYIFYG…IFNHKPKYNV (81 aa)) constitute a GIY-YIG domain. One can recognise a UVR domain in the interval 200–235 (SETLDLIEEKMKKHAKMMDFENAAKYRDLLVKFENV).

This sequence belongs to the UvrC family. Interacts with UvrB in an incision complex.

It is found in the cytoplasm. Its function is as follows. The UvrABC repair system catalyzes the recognition and processing of DNA lesions. UvrC both incises the 5' and 3' sides of the lesion. The N-terminal half is responsible for the 3' incision and the C-terminal half is responsible for the 5' incision. The chain is UvrABC system protein C from Pseudothermotoga lettingae (strain ATCC BAA-301 / DSM 14385 / NBRC 107922 / TMO) (Thermotoga lettingae).